A 372-amino-acid polypeptide reads, in one-letter code: L-selectin (372 aa).

An N-terminal signal peptide occupies residues 1 to 28 (MIFPRKCQSTQRDLWNIFKLWGWTMLCC). A propeptide spanning residues 29–38 (DFLAHHGTDC) is cleaved from the precursor. The Extracellular portion of the chain corresponds to 39 to 332 (WTYHYSENPM…FSMIKEGDYN (294 aa)). The C-type lectin domain maps to 55–155 (RFCRENYTDL…ACHKPKAALC (101 aa)). 10 disulfide bridges follow: Cys57–Cys155, Cys128–Cys147, Cys128–Cys160, Cys160–Cys171, Cys165–Cys180, Cys182–Cys191, Cys197–Cys241, Cys227–Cys254, Cys259–Cys303, and Cys289–Cys316. Asn60 and Asn104 each carry an N-linked (GlcNAc...) asparagine glycan. Ca(2+)-binding residues include Glu118, Asn120, Glu126, Asn143, and Asp144. One can recognise an EGF-like domain in the interval 156-192 (YTASCQPWSCSGHGECVEIINNYTCNCDVGYYGPQCQ). A glycan (N-linked (GlcNAc...) asparagine) is linked at Asn177. 2 consecutive Sushi domains span residues 195–256 (IQCE…TCQV) and 257–318 (IQCE…ICQK). Asn226, Asn232, Asn246, and Asn271 each carry an N-linked (GlcNAc...) asparagine glycan. A helical transmembrane segment spans residues 333 to 355 (PLFIPVAVMVTAFSGLAFIIWLA). The Cytoplasmic segment spans residues 356-372 (RRLKKGKKSKKSMDDPY).

Belongs to the selectin/LECAM family. Interaction with SELPLG/PSGL1 and PODXL2 is required for promoting recruitment and rolling of leukocytes. This interaction is dependent on the sialyl Lewis X glycan modification of SELPLG and PODXL2, and tyrosine sulfation modifications of SELPLG. Sulfation on 'Tyr-51' of SELPLG is important for L-selectin binding. In terms of processing, N-glycosylated.

It is found in the cell membrane. Calcium-dependent lectin that mediates cell adhesion by binding to glycoproteins on neighboring cells. Mediates the adherence of lymphocytes to endothelial cells of high endothelial venules in peripheral lymph nodes. Promotes initial tethering and rolling of leukocytes in endothelia. The sequence is that of L-selectin (SELL) from Macaca mulatta (Rhesus macaque).